The sequence spans 301 residues: Mitochondrial import receptor subunit TOM40 homolog (301 aa).

The interval 1–20 (MATPTESEFAAPIPQTNPGS) is disordered.

This sequence belongs to the Tom40 family. As to quaternary structure, forms part of the preprotein translocase complex of the outer mitochondrial membrane (TOM complex). Interacts with mitochondrial targeting sequences.

The protein localises to the mitochondrion outer membrane. Functionally, channel-forming protein essential for import of protein precursors into mitochondria. Specifically required for nnt-1 accumulation in the mitochondria and may be involved in the secretion of daf-28/insulin from the mitochondria. Required for embryonic and larval development. The polypeptide is Mitochondrial import receptor subunit TOM40 homolog (Caenorhabditis briggsae).